The chain runs to 158 residues: Deoxyuridine 5'-triphosphate nucleotidohydrolase (158 aa).

Substrate contacts are provided by residues 75-77 (RSG), Asn88, 92-94 (TVD), and Lys102.

Belongs to the dUTPase family. Requires Mg(2+) as cofactor.

It catalyses the reaction dUTP + H2O = dUMP + diphosphate + H(+). It participates in pyrimidine metabolism; dUMP biosynthesis; dUMP from dCTP (dUTP route): step 2/2. In terms of biological role, this enzyme is involved in nucleotide metabolism: it produces dUMP, the immediate precursor of thymidine nucleotides and it decreases the intracellular concentration of dUTP so that uracil cannot be incorporated into DNA. This is Deoxyuridine 5'-triphosphate nucleotidohydrolase from Bifidobacterium longum (strain DJO10A).